The following is a 103-amino-acid chain: UPF0134 protein MPN_484 (103 aa).

The protein belongs to the UPF0134 family.

The protein is UPF0134 protein MPN_484 of Mycoplasma pneumoniae (strain ATCC 29342 / M129 / Subtype 1) (Mycoplasmoides pneumoniae).